The following is a 107-amino-acid chain: IQ domain-containing protein F6 (107 aa).

The IQ domain occupies 42–71 (QEWAVVKVQAQVRMWQARRRFLQARQAACI).

The polypeptide is IQ domain-containing protein F6 (IQCF6) (Homo sapiens (Human)).